We begin with the raw amino-acid sequence, 180 residues long: Probable DNA replication complex GINS protein PSF2 (180 aa).

It belongs to the GINS2/PSF2 family. As to quaternary structure, component of the GINS complex which is a heterotetramer of gins1, gins2, gins3 and gins4.

The protein localises to the nucleus. Required for correct functioning of the GINS complex, a complex that plays an essential role in the initiation of DNA replication, and progression of DNA replication forks. GINS complex is a core component of CDC45-MCM-GINS (CMG) helicase, the molecular machine that unwinds template DNA during replication, and around which the replisome is built. The protein is Probable DNA replication complex GINS protein PSF2 (psf-2) of Caenorhabditis elegans.